A 460-amino-acid polypeptide reads, in one-letter code: Dynactin subunit 4 (460 aa).

The residue at position 2 (alanine 2) is an N-acetylalanine. Positions 152–172 (QQLAQKEKVERDRKKLARRRN) form a coiled coil. At serine 196 the chain carries Phosphoserine. Residue lysine 215 forms a Glycyl lysine isopeptide (Lys-Gly) (interchain with G-Cter in SUMO2) linkage. At threonine 407 the chain carries Phosphothreonine.

The protein belongs to the dynactin subunit 4 family. As to quaternary structure, subunit of dynactin, a multiprotein complex part of a tripartite complex with dynein and a adapter, such as BICDL1, BICD2 or HOOK3. The dynactin complex is built around ACTR1A/ACTB filament and consists of an actin-related filament composed of a shoulder domain, a pointed end and a barbed end. Its length is defined by its flexible shoulder domain. The soulder is composed of 2 DCTN1 subunits, 4 DCTN2 and 2 DCTN3. The 4 DCNT2 (via N-terminus) bind the ACTR1A filament and act as molecular rulers to determine the length. The pointed end is important for binding dynein-dynactin cargo adapters. Consists of 4 subunits: ACTR10, DCNT4, DCTN5 and DCTN6. The barbed end is composed of a CAPZA1:CAPZB heterodimers, which binds ACTR1A/ACTB filament and dynactin and stabilizes dynactin. Interacts with ATP7B, but not ATP7A, in a copper-dependent manner. Interacts with ANK2; this interaction is required for localization at costameres. Interacts with N4BP2L1.

It is found in the cytoplasm. The protein resides in the cytoskeleton. It localises to the microtubule organizing center. The protein localises to the centrosome. Its subcellular location is the stress fiber. It is found in the cell cortex. The protein resides in the myofibril. It localises to the sarcomere. Part of the dynactin complex that activates the molecular motor dynein for ultra-processive transport along microtubules. In Homo sapiens (Human), this protein is Dynactin subunit 4.